The sequence spans 395 residues: Obg-like ATPase 1 (395 aa).

One can recognise an OBG-type G domain in the interval 22–280 (LKVGILGLPN…MPEDERQKYL (259 aa)). Residue 31–36 (NVGKST) participates in ATP binding. The Mg(2+) site is built by S35 and T55. L228 provides a ligand contact to ATP. Residues 301–384 (QLEYFFTSGE…QDGDVIFFKF (84 aa)) form the TGS domain.

This sequence belongs to the TRAFAC class OBG-HflX-like GTPase superfamily. OBG GTPase family. YchF/OLA1 subfamily. In terms of assembly, monomer. Mg(2+) serves as cofactor. Expressed in the nervous system, pharyngeal muscles and intestine (at protein level).

The protein resides in the cytoplasm. Its function is as follows. Hydrolyzes ATP, and can also hydrolyze GTP with lower efficiency. Has lower affinity for GTP. Plays a role in regulating starvation-induced thermotaxis responses in AFD thermosensory neurons. This chain is Obg-like ATPase 1, found in Caenorhabditis elegans.